Reading from the N-terminus, the 602-residue chain is UvrABC system protein C (602 aa).

The GIY-YIG domain maps to 15 to 100 (DQSGVYHYFD…IKQLKPKYNI (86 aa)). A UVR domain is found at 206 to 241 (SKLISRLKERMEKLAENLRFEEAGELRDRIEKIKRI).

The protein belongs to the UvrC family. Interacts with UvrB in an incision complex.

Its subcellular location is the cytoplasm. The UvrABC repair system catalyzes the recognition and processing of DNA lesions. UvrC both incises the 5' and 3' sides of the lesion. The N-terminal half is responsible for the 3' incision and the C-terminal half is responsible for the 5' incision. The chain is UvrABC system protein C from Wolinella succinogenes (strain ATCC 29543 / DSM 1740 / CCUG 13145 / JCM 31913 / LMG 7466 / NCTC 11488 / FDC 602W) (Vibrio succinogenes).